The chain runs to 130 residues: Small ribosomal subunit protein uS8A (130 aa).

Belongs to the universal ribosomal protein uS8 family.

The chain is Small ribosomal subunit protein uS8A (RpS15Aa) from Drosophila melanogaster (Fruit fly).